Consider the following 2073-residue polypeptide: Non-reducing polyketide synthase cla3 (2073 aa).

The tract at residues 9 to 242 is N-terminal acylcarrier protein transacylase domain (SAT); it reads LLFGDYTEPW…EKLNIHALQH (234 aa). A Ketosynthase family 3 (KS3) domain is found at 363–793; the sequence is SGRIAIVGMS…GGNGCLLLEE (431 aa). Catalysis depends on for beta-ketoacyl synthase activity residues cysteine 538, histidine 673, and histidine 712. The malonyl-CoA:ACP transacylase (MAT) domain stretch occupies residues 898-1198; that stretch reads TFTGQGSQYA…KIMSTLDATG (301 aa). The For acyl/malonyl transferase activity role is filled by serine 987. A product template (PT) domain region spans residues 1276–1590; that stretch reads STCAQYVITE…QNVILERLLG (315 aa). The tract at residues 1279-1420 is N-terminal hotdog fold; that stretch reads AQYVITETKT…AGLESQWEKS (142 aa). The region spanning 1279–1586 is the PKS/mFAS DH domain; that stretch reads AQYVITETKT…FHRVQNVILE (308 aa). The active-site Proton acceptor; for dehydratase activity is the histidine 1311. The segment at 1439–1586 is C-terminal hotdog fold; sequence QGHRIQRDIY…FHRVQNVILE (148 aa). The active-site Proton donor; for dehydratase activity is aspartate 1500. A disordered region spans residues 1594–1637; that stretch reads SSSVPAQASDPLRSKRSPQEARSLPGEAKTEKPGSTIATTSPVL. The Carrier domain occupies 1641-1718; sequence KSEQGMFQAL…NLRCAFDEDV (78 aa). Serine 1678 carries the O-(pantetheine 4'-phosphoryl)serine modification. Positions 1721–1738 are enriched in polar residues; that stretch reads EFTDSEVTSGTPNSSESV. Positions 1721–1786 are disordered; the sequence is EFTDSEVTSG…GVLDDGSPQP (66 aa). Residues 1747–1774 show a composition bias toward basic and acidic residues; it reads PEEHAFKEPKDDSPLARRDMDNSNDRSL. Residues 1805-1950 are thioesterase (TE) domain; sequence FLIADGSGSI…MQQHLRAIFK (146 aa). Histidine 2058 serves as the catalytic For thioesterase activity.

It functions in the pathway secondary metabolite biosynthesis. Highly reducing polyketide synthase; part of the gene cluster that mediates the biosynthesis of cladosporin, a tricyclic octaketide that acts as an antimalarial agent though inhibition of the Plasmodium falciparum lysyl-tRNA synthetase. The highly reducing polyketide synthase cla2 is responsible for biosynthesis up to the pentaketide stage, including of the tetrahydropyran (THP) ring, whereas the three subsequent ketide extensions with no reduction are catalyzed by the non-reducing polyketide synthase cla3. This chain is Non-reducing polyketide synthase cla3, found in Cladosporium cladosporioides.